The following is a 306-amino-acid chain: Curved DNA-binding protein (306 aa).

The region spanning 5-69 (DYYAIMGVKP…QRRAEYDQMW (65 aa)) is the J domain.

The protein resides in the cytoplasm. It localises to the nucleoid. Its function is as follows. DNA-binding protein that preferentially recognizes a curved DNA sequence. It is probably a functional analog of DnaJ; displays overlapping activities with DnaJ, but functions under different conditions, probably acting as a molecular chaperone in an adaptive response to environmental stresses other than heat shock. Lacks autonomous chaperone activity; binds native substrates and targets them for recognition by DnaK. Its activity is inhibited by the binding of CbpM. This chain is Curved DNA-binding protein, found in Escherichia coli (strain SMS-3-5 / SECEC).